The chain runs to 156 residues: 6,7-dimethyl-8-ribityllumazine synthase (156 aa).

Residues phenylalanine 22, 57–59, and 81–83 each bind 5-amino-6-(D-ribitylamino)uracil; these read AVE and SVI. Residue 86 to 87 participates in (2S)-2-hydroxy-3-oxobutyl phosphate binding; it reads GT. Histidine 89 (proton donor) is an active-site residue. Phenylalanine 114 provides a ligand contact to 5-amino-6-(D-ribitylamino)uracil. A (2S)-2-hydroxy-3-oxobutyl phosphate-binding site is contributed by arginine 128.

It belongs to the DMRL synthase family. Forms an icosahedral capsid composed of 60 subunits, arranged as a dodecamer of pentamers.

It catalyses the reaction (2S)-2-hydroxy-3-oxobutyl phosphate + 5-amino-6-(D-ribitylamino)uracil = 6,7-dimethyl-8-(1-D-ribityl)lumazine + phosphate + 2 H2O + H(+). Its pathway is cofactor biosynthesis; riboflavin biosynthesis; riboflavin from 2-hydroxy-3-oxobutyl phosphate and 5-amino-6-(D-ribitylamino)uracil: step 1/2. In terms of biological role, catalyzes the formation of 6,7-dimethyl-8-ribityllumazine by condensation of 5-amino-6-(D-ribitylamino)uracil with 3,4-dihydroxy-2-butanone 4-phosphate. This is the penultimate step in the biosynthesis of riboflavin. This Vibrio vulnificus (strain CMCP6) protein is 6,7-dimethyl-8-ribityllumazine synthase.